A 456-amino-acid chain; its full sequence is Methylenetetrahydrofolate--tRNA-(uracil-5-)-methyltransferase TrmFO (456 aa).

Position 11 to 16 (11 to 16 (GGGLAG)) interacts with FAD.

This sequence belongs to the MnmG family. TrmFO subfamily. FAD serves as cofactor.

The protein localises to the cytoplasm. It carries out the reaction uridine(54) in tRNA + (6R)-5,10-methylene-5,6,7,8-tetrahydrofolate + NADH + H(+) = 5-methyluridine(54) in tRNA + (6S)-5,6,7,8-tetrahydrofolate + NAD(+). It catalyses the reaction uridine(54) in tRNA + (6R)-5,10-methylene-5,6,7,8-tetrahydrofolate + NADPH + H(+) = 5-methyluridine(54) in tRNA + (6S)-5,6,7,8-tetrahydrofolate + NADP(+). In terms of biological role, catalyzes the folate-dependent formation of 5-methyl-uridine at position 54 (M-5-U54) in all tRNAs. The sequence is that of Methylenetetrahydrofolate--tRNA-(uracil-5-)-methyltransferase TrmFO from Synechocystis sp. (strain ATCC 27184 / PCC 6803 / Kazusa).